A 238-amino-acid chain; its full sequence is Succinate dehydrogenase assembly factor 2, mitochondrial (238 aa).

A disordered region spans residues 47-82 (GLKADGSRADQAEAGASQSLDKQSRTLDSVRDDTLS). Positions 68–80 (KQSRTLDSVRDDT) are enriched in basic and acidic residues.

Belongs to the SDHAF2 family. As to quaternary structure, interacts with the flavoprotein subunit within the SDH catalytic dimer.

Its subcellular location is the mitochondrion matrix. Plays an essential role in the assembly of succinate dehydrogenase (SDH), an enzyme complex (also referred to as respiratory complex II) that is a component of both the tricarboxylic acid (TCA) cycle and the mitochondrial electron transport chain, and which couples the oxidation of succinate to fumarate with the reduction of ubiquinone (coenzyme Q) to ubiquinol. Required for flavinylation (covalent attachment of FAD) of the flavoprotein subunit of the SDH catalytic dimer. This is Succinate dehydrogenase assembly factor 2, mitochondrial from Mycosarcoma maydis (Corn smut fungus).